The following is a 222-amino-acid chain: Voltage-dependent calcium channel gamma-1 subunit (222 aa).

Residues 1–10 lie on the Cytoplasmic side of the membrane; it reads MSPTEAPKVR. Residues 11-29 form a helical membrane-spanning segment; the sequence is VTLFCILVGIVLAMTAVVS. Over 30-108 the chain is Extracellular; it reads DHWAVLSPHM…TQKEYSISAA (79 aa). 2 N-linked (GlcNAc...) asparagine glycosylation sites follow: N43 and N79. A disulfide bridge links C57 with C80. Residues 109–129 traverse the membrane as a helical segment; it reads AISVFSLGFLIMGTICALMAF. The Cytoplasmic portion of the chain corresponds to 130–134; that stretch reads RKKRD. Residues 135–155 traverse the membrane as a helical segment; it reads YLLRPASMFYVFAGLCLFVSL. At 156-179 the chain is on the extracellular side; the sequence is EVMRQSVKRMIDSEDTVWIEYYYS. The helical transmembrane segment at 180–204 threads the bilayer; sequence WSFACACAAFVLLFLGGISLLLFSL. The Cytoplasmic portion of the chain corresponds to 205-222; that stretch reads PRMPQNPWESCMDAEPEH.

This sequence belongs to the PMP-22/EMP/MP20 family. CACNG subfamily. In terms of assembly, component of a calcium channel complex consisting of a pore-forming alpha subunit (CACNA1S) and the ancillary subunits CACNB1 or CACNB2, CACNG1 and CACNA2D1. The channel complex contains alpha, beta, gamma and delta subunits in a 1:1:1:1 ratio, i.e. it contains either CACNB1 or CACNB2. Post-translationally, N-glycosylated. Skeletal muscle (at protein level).

The protein localises to the cell membrane. It localises to the sarcolemma. Functionally, regulatory subunit of the voltage-gated calcium channel that gives rise to L-type calcium currents in skeletal muscle. Regulates channel inactivation kinetics. This Oryctolagus cuniculus (Rabbit) protein is Voltage-dependent calcium channel gamma-1 subunit (CACNG1).